Here is a 506-residue protein sequence, read N- to C-terminus: Aldehyde dehydrogenase [NAD(P)+] 2 (506 aa).

The Proton acceptor role is filled by Glu-268. Catalysis depends on Cys-302, which acts as the Nucleophile.

This sequence belongs to the aldehyde dehydrogenase family.

The protein localises to the cytoplasm. The enzyme catalyses an aldehyde + NAD(+) + H2O = a carboxylate + NADH + 2 H(+). It catalyses the reaction 3-aminopropanal + NAD(+) + H2O = beta-alanine + NADH + 2 H(+). In terms of biological role, cytoplasmic aldehyde dehydrogenase involved in ethanol oxidation. Involved in pantothenic acid production through the conversion of 3-aminopropanal to beta-alanine, an intermediate in pantothenic acid (vitamin B5) and coenzyme A (CoA) biosynthesis. This chain is Aldehyde dehydrogenase [NAD(P)+] 2 (ALD3), found in Saccharomyces cerevisiae (strain ATCC 204508 / S288c) (Baker's yeast).